We begin with the raw amino-acid sequence, 366 residues long: Phenylalanine--tRNA ligase alpha subunit (366 aa).

Glu259 contributes to the Mg(2+) binding site.

This sequence belongs to the class-II aminoacyl-tRNA synthetase family. Phe-tRNA synthetase alpha subunit type 1 subfamily. As to quaternary structure, tetramer of two alpha and two beta subunits. The cofactor is Mg(2+).

It localises to the cytoplasm. It carries out the reaction tRNA(Phe) + L-phenylalanine + ATP = L-phenylalanyl-tRNA(Phe) + AMP + diphosphate + H(+). This Novosphingobium aromaticivorans (strain ATCC 700278 / DSM 12444 / CCUG 56034 / CIP 105152 / NBRC 16084 / F199) protein is Phenylalanine--tRNA ligase alpha subunit.